A 287-amino-acid chain; its full sequence is Formamidopyrimidine-DNA glycosylase (287 aa).

The active-site Schiff-base intermediate with DNA is P2. E3 functions as the Proton donor in the catalytic mechanism. Catalysis depends on K58, which acts as the Proton donor; for beta-elimination activity. DNA-binding residues include H104, R123, and R166. Residues 251–287 (RTYDREGQPCRNDGCRGVIGREVQAGRSTFYCPVCQR) form an FPG-type zinc finger. The Proton donor; for delta-elimination activity role is filled by R277.

This sequence belongs to the FPG family. In terms of assembly, monomer. Zn(2+) serves as cofactor.

It catalyses the reaction Hydrolysis of DNA containing ring-opened 7-methylguanine residues, releasing 2,6-diamino-4-hydroxy-5-(N-methyl)formamidopyrimidine.. The catalysed reaction is 2'-deoxyribonucleotide-(2'-deoxyribose 5'-phosphate)-2'-deoxyribonucleotide-DNA = a 3'-end 2'-deoxyribonucleotide-(2,3-dehydro-2,3-deoxyribose 5'-phosphate)-DNA + a 5'-end 5'-phospho-2'-deoxyribonucleoside-DNA + H(+). Functionally, involved in base excision repair of DNA damaged by oxidation or by mutagenic agents. Acts as a DNA glycosylase that recognizes and removes damaged bases. Has a preference for oxidized purines, such as 7,8-dihydro-8-oxoguanine (8-oxoG). Has AP (apurinic/apyrimidinic) lyase activity and introduces nicks in the DNA strand. Cleaves the DNA backbone by beta-delta elimination to generate a single-strand break at the site of the removed base with both 3'- and 5'-phosphates. The polypeptide is Formamidopyrimidine-DNA glycosylase (Phenylobacterium zucineum (strain HLK1)).